Here is a 713-residue protein sequence, read N- to C-terminus: Polyribonucleotide nucleotidyltransferase (713 aa).

2 residues coordinate Mg(2+): aspartate 485 and aspartate 491. A KH domain is found at proline 552–isoleucine 611. An S1 motif domain is found at asparagine 621 to lysine 689.

Belongs to the polyribonucleotide nucleotidyltransferase family. As to quaternary structure, component of the RNA degradosome, which is a multiprotein complex involved in RNA processing and mRNA degradation. Mg(2+) is required as a cofactor.

The protein localises to the cytoplasm. The catalysed reaction is RNA(n+1) + phosphate = RNA(n) + a ribonucleoside 5'-diphosphate. In terms of biological role, involved in mRNA degradation. Catalyzes the phosphorolysis of single-stranded polyribonucleotides processively in the 3'- to 5'-direction. This Aeromonas salmonicida (strain A449) protein is Polyribonucleotide nucleotidyltransferase.